Here is a 131-residue protein sequence, read N- to C-terminus: Profilin-5 (131 aa).

C13 and C115 are joined by a disulfide. Residues 81 to 97 (AVIRGKKGAGGITIKKT) carry the Involved in PIP2 interaction motif. Position 111 is a phosphothreonine (T111).

It belongs to the profilin family. In terms of assembly, occurs in many kinds of cells as a complex with monomeric actin in a 1:1 ratio. Post-translationally, phosphorylated by MAP kinases.

The protein localises to the cytoplasm. Its subcellular location is the cytoskeleton. In terms of biological role, binds to actin and affects the structure of the cytoskeleton. At high concentrations, profilin prevents the polymerization of actin, whereas it enhances it at low concentrations. The chain is Profilin-5 from Phleum pratense (Common timothy).